Reading from the N-terminus, the 309-residue chain is Aspartate carbamoyltransferase catalytic subunit (309 aa).

Carbamoyl phosphate-binding residues include R55 and T56. K85 contacts L-aspartate. Carbamoyl phosphate-binding residues include R106, H135, and Q138. The L-aspartate site is built by R168 and R230. Carbamoyl phosphate contacts are provided by L268 and P269.

Belongs to the aspartate/ornithine carbamoyltransferase superfamily. ATCase family. Heterododecamer (2C3:3R2) of six catalytic PyrB chains organized as two trimers (C3), and six regulatory PyrI chains organized as three dimers (R2).

The enzyme catalyses carbamoyl phosphate + L-aspartate = N-carbamoyl-L-aspartate + phosphate + H(+). The protein operates within pyrimidine metabolism; UMP biosynthesis via de novo pathway; (S)-dihydroorotate from bicarbonate: step 2/3. Catalyzes the condensation of carbamoyl phosphate and aspartate to form carbamoyl aspartate and inorganic phosphate, the committed step in the de novo pyrimidine nucleotide biosynthesis pathway. The polypeptide is Aspartate carbamoyltransferase catalytic subunit (Vibrio campbellii (strain ATCC BAA-1116)).